The primary structure comprises 74 residues: Protein SMIM7 homolog (74 aa).

Residues 53-73 (FRAFIGLWNIFIMFLMLVFFG) form a helical membrane-spanning segment.

It belongs to the SMIM7 family.

Its subcellular location is the membrane. The protein is Protein SMIM7 homolog of Ixodes scapularis (Black-legged tick).